We begin with the raw amino-acid sequence, 597 residues long: Elongation factor 4 (597 aa).

Residues Lys2 to Glu184 form the tr-type G domain. GTP-binding positions include Asp14–Thr19 and Asn131–Asp134.

Belongs to the TRAFAC class translation factor GTPase superfamily. Classic translation factor GTPase family. LepA subfamily.

The protein resides in the cell inner membrane. The enzyme catalyses GTP + H2O = GDP + phosphate + H(+). In terms of biological role, required for accurate and efficient protein synthesis under certain stress conditions. May act as a fidelity factor of the translation reaction, by catalyzing a one-codon backward translocation of tRNAs on improperly translocated ribosomes. Back-translocation proceeds from a post-translocation (POST) complex to a pre-translocation (PRE) complex, thus giving elongation factor G a second chance to translocate the tRNAs correctly. Binds to ribosomes in a GTP-dependent manner. The chain is Elongation factor 4 from Actinobacillus succinogenes (strain ATCC 55618 / DSM 22257 / CCUG 43843 / 130Z).